A 360-amino-acid polypeptide reads, in one-letter code: Histidinol-phosphate aminotransferase 2 (360 aa).

Lys-218 carries the N6-(pyridoxal phosphate)lysine modification.

Belongs to the class-II pyridoxal-phosphate-dependent aminotransferase family. Histidinol-phosphate aminotransferase subfamily. Homodimer. Pyridoxal 5'-phosphate is required as a cofactor.

The enzyme catalyses L-histidinol phosphate + 2-oxoglutarate = 3-(imidazol-4-yl)-2-oxopropyl phosphate + L-glutamate. It functions in the pathway amino-acid biosynthesis; L-histidine biosynthesis; L-histidine from 5-phospho-alpha-D-ribose 1-diphosphate: step 7/9. This Nitrosococcus oceani (strain ATCC 19707 / BCRC 17464 / JCM 30415 / NCIMB 11848 / C-107) protein is Histidinol-phosphate aminotransferase 2.